Here is a 501-residue protein sequence, read N- to C-terminus: ATP synthase subunit alpha (501 aa).

Residue 169 to 176 (GDRQTGKT) coordinates ATP.

The protein belongs to the ATPase alpha/beta chains family. As to quaternary structure, F-type ATPases have 2 components, CF(1) - the catalytic core - and CF(0) - the membrane proton channel. CF(1) has five subunits: alpha(3), beta(3), gamma(1), delta(1), epsilon(1). CF(0) has three main subunits: a(1), b(2) and c(9-12). The alpha and beta chains form an alternating ring which encloses part of the gamma chain. CF(1) is attached to CF(0) by a central stalk formed by the gamma and epsilon chains, while a peripheral stalk is formed by the delta and b chains.

It localises to the cell membrane. The enzyme catalyses ATP + H2O + 4 H(+)(in) = ADP + phosphate + 5 H(+)(out). Its function is as follows. Produces ATP from ADP in the presence of a proton gradient across the membrane. The alpha chain is a regulatory subunit. This Streptococcus equi subsp. zooepidemicus (strain H70) protein is ATP synthase subunit alpha.